Here is a 250-residue protein sequence, read N- to C-terminus: 5-oxoprolinase subunit A (250 aa).

This sequence belongs to the LamB/PxpA family. In terms of assembly, forms a complex composed of PxpA, PxpB and PxpC.

It carries out the reaction 5-oxo-L-proline + ATP + 2 H2O = L-glutamate + ADP + phosphate + H(+). Its function is as follows. Catalyzes the cleavage of 5-oxoproline to form L-glutamate coupled to the hydrolysis of ATP to ADP and inorganic phosphate. This is 5-oxoprolinase subunit A from Streptomyces coelicolor (strain ATCC BAA-471 / A3(2) / M145).